The primary structure comprises 194 residues: 3-isopropylmalate dehydratase small subunit (194 aa).

The protein belongs to the LeuD family. LeuD type 1 subfamily. In terms of assembly, heterodimer of LeuC and LeuD.

The enzyme catalyses (2R,3S)-3-isopropylmalate = (2S)-2-isopropylmalate. It participates in amino-acid biosynthesis; L-leucine biosynthesis; L-leucine from 3-methyl-2-oxobutanoate: step 2/4. Functionally, catalyzes the isomerization between 2-isopropylmalate and 3-isopropylmalate, via the formation of 2-isopropylmaleate. The polypeptide is 3-isopropylmalate dehydratase small subunit (Halalkalibacterium halodurans (strain ATCC BAA-125 / DSM 18197 / FERM 7344 / JCM 9153 / C-125) (Bacillus halodurans)).